The primary structure comprises 415 residues: Serine hydroxymethyltransferase (415 aa).

Residues L122 and 126–128 (GHL) each bind (6S)-5,6,7,8-tetrahydrofolate. The residue at position 230 (K230) is an N6-(pyridoxal phosphate)lysine.

This sequence belongs to the SHMT family. In terms of assembly, homodimer. Pyridoxal 5'-phosphate is required as a cofactor.

It localises to the cytoplasm. It carries out the reaction (6R)-5,10-methylene-5,6,7,8-tetrahydrofolate + glycine + H2O = (6S)-5,6,7,8-tetrahydrofolate + L-serine. Its pathway is one-carbon metabolism; tetrahydrofolate interconversion. The protein operates within amino-acid biosynthesis; glycine biosynthesis; glycine from L-serine: step 1/1. In terms of biological role, catalyzes the reversible interconversion of serine and glycine with tetrahydrofolate (THF) serving as the one-carbon carrier. This reaction serves as the major source of one-carbon groups required for the biosynthesis of purines, thymidylate, methionine, and other important biomolecules. Also exhibits THF-independent aldolase activity toward beta-hydroxyamino acids, producing glycine and aldehydes, via a retro-aldol mechanism. The sequence is that of Serine hydroxymethyltransferase from Cupriavidus necator (strain ATCC 17699 / DSM 428 / KCTC 22496 / NCIMB 10442 / H16 / Stanier 337) (Ralstonia eutropha).